Here is a 347-residue protein sequence, read N- to C-terminus: GMP reductase (347 aa).

An NADP(+)-binding site is contributed by 108 to 131 (ADFQKTKDIMALTDDLIFICIDIA). K(+)-binding residues include glycine 181 and glycine 183. The active-site Thioimidate intermediate is cysteine 186. Residue 216–239 (IIGDGGCSCAGDVSKAFGGGADFV) participates in NADP(+) binding.

This sequence belongs to the IMPDH/GMPR family. GuaC type 1 subfamily. Homotetramer.

It carries out the reaction IMP + NH4(+) + NADP(+) = GMP + NADPH + 2 H(+). Catalyzes the irreversible NADPH-dependent deamination of GMP to IMP. It functions in the conversion of nucleobase, nucleoside and nucleotide derivatives of G to A nucleotides, and in maintaining the intracellular balance of A and G nucleotides. The sequence is that of GMP reductase from Aliivibrio fischeri (strain ATCC 700601 / ES114) (Vibrio fischeri).